Reading from the N-terminus, the 43-residue chain is Hemolysin H1U (43 aa).

The residue at position 1 (Met1) is an N-formylmethionine.

It belongs to the staphylococcal hemolytic protein family.

The protein localises to the secreted. Functionally, virulence factor. Causes hemolysis of erythrocytes. Acts synergistically with beta-hemolysins from S.aureus ATCC 25923. Cytotoxic towards human dermal fibroblasts. This chain is Hemolysin H1U, found in Staphylococcus ureilyticus (Staphylococcus cohnii subsp. urealyticus).